The sequence spans 70 residues: Pyruvate-flavodoxin oxidoreductase (70 aa).

This sequence belongs to the pyruvate:ferredoxin/flavodoxin oxidoreductase family.

It catalyses the reaction oxidized [flavodoxin] + pyruvate + CoA + 2 H(+) = reduced [flavodoxin] + acetyl-CoA + CO2. Functionally, oxidoreductase required for the transfer of electrons from pyruvate to flavodoxin, which reduces nitrogenase. The protein is Pyruvate-flavodoxin oxidoreductase (nifJ) of Anabaena variabilis.